A 103-amino-acid chain; its full sequence is Thrombin inhibitor rhodniin (103 aa).

2 Kazal-like domains span residues 1–50 (EGGE…PCEP) and 51–103 (DEDE…PCRT). 6 disulfides stabilise this stretch: Cys-6/Cys-31, Cys-8/Cys-27, Cys-16/Cys-48, Cys-57/Cys-84, Cys-60/Cys-80, and Cys-69/Cys-101.

The protein localises to the secreted. In terms of biological role, thrombin-specific inhibitor. Appears to form 1:1 complexes with thrombin. Prevents blood clotting to allow the insect to feed on blood. The protein is Thrombin inhibitor rhodniin of Rhodnius prolixus (Triatomid bug).